An 83-amino-acid polypeptide reads, in one-letter code: Cytochrome b559 subunit alpha (83 aa).

The chain crosses the membrane as a helical span at residues 21–35; the sequence is VIHSITIPSLFIAGW. Residue His23 coordinates heme.

This sequence belongs to the PsbE/PsbF family. In terms of assembly, heterodimer of an alpha subunit and a beta subunit. PSII is composed of 1 copy each of membrane proteins PsbA, PsbB, PsbC, PsbD, PsbE, PsbF, PsbH, PsbI, PsbJ, PsbK, PsbL, PsbM, PsbT, PsbX, PsbY, PsbZ, Psb30/Ycf12, at least 3 peripheral proteins of the oxygen-evolving complex and a large number of cofactors. It forms dimeric complexes. The cofactor is heme b.

It is found in the plastid. Its subcellular location is the chloroplast thylakoid membrane. Functionally, this b-type cytochrome is tightly associated with the reaction center of photosystem II (PSII). PSII is a light-driven water:plastoquinone oxidoreductase that uses light energy to abstract electrons from H(2)O, generating O(2) and a proton gradient subsequently used for ATP formation. It consists of a core antenna complex that captures photons, and an electron transfer chain that converts photonic excitation into a charge separation. The chain is Cytochrome b559 subunit alpha from Liriodendron tulipifera (Tuliptree).